Consider the following 274-residue polypeptide: Type III pantothenate kinase (274 aa).

ATP is bound at residue 6–13 (DVRNTHTV). 109-112 (GADR) lines the substrate pocket. The active-site Proton acceptor is the Asp111. Residue Asp131 participates in K(+) binding. Ser134 contacts ATP. Substrate is bound at residue Thr186.

This sequence belongs to the type III pantothenate kinase family. In terms of assembly, homodimer. NH4(+) is required as a cofactor. K(+) serves as cofactor.

It localises to the cytoplasm. The catalysed reaction is (R)-pantothenate + ATP = (R)-4'-phosphopantothenate + ADP + H(+). Its pathway is cofactor biosynthesis; coenzyme A biosynthesis; CoA from (R)-pantothenate: step 1/5. In terms of biological role, catalyzes the phosphorylation of pantothenate (Pan), the first step in CoA biosynthesis. The chain is Type III pantothenate kinase from Mycobacterium leprae (strain Br4923).